A 425-amino-acid polypeptide reads, in one-letter code: Histidine--tRNA ligase (425 aa).

This sequence belongs to the class-II aminoacyl-tRNA synthetase family. In terms of assembly, homodimer.

It localises to the cytoplasm. The catalysed reaction is tRNA(His) + L-histidine + ATP = L-histidyl-tRNA(His) + AMP + diphosphate + H(+). In Erwinia tasmaniensis (strain DSM 17950 / CFBP 7177 / CIP 109463 / NCPPB 4357 / Et1/99), this protein is Histidine--tRNA ligase.